The chain runs to 512 residues: Maturase K (512 aa).

This sequence belongs to the intron maturase 2 family. MatK subfamily.

Its subcellular location is the plastid. It localises to the chloroplast. In terms of biological role, usually encoded in the trnK tRNA gene intron. Probably assists in splicing its own and other chloroplast group II introns. In Koelreuteria paniculata (Goldenrain tree), this protein is Maturase K.